We begin with the raw amino-acid sequence, 425 residues long: Probable isoprenylcysteine alpha-carbonyl methylesterase ICMEL1 (425 aa).

Residues 1–10 (MQVELADRAA) are compositionally biased toward basic and acidic residues. A disordered region spans residues 1–42 (MQVELADRAAARPSETGEAPPSSPAAAAAASAAAEDAPLLPG). A compositionally biased stretch (low complexity) spans 24-34 (PAAAAAASAAA). A run of 2 helical transmembrane segments spans residues 99–119 (FLALCCYTFLLMPGFIQVVYY) and 154–174 (VVAFVTGGAWIIGYKGWGALL). Residues 160-162 (GGA) and 231-233 (QSA) each bind substrate. Catalysis depends on residues S232, D334, and H366.

The protein belongs to the AB hydrolase superfamily. Isoprenylcysteine methylesterase family.

The protein localises to the endoplasmic reticulum membrane. It is found in the golgi apparatus membrane. It carries out the reaction [protein]-C-terminal S-[(2E,6E)-farnesyl]-L-cysteine methyl ester + H2O = [protein]-C-terminal S-[(2E,6E)-farnesyl]-L-cysteine + methanol + H(+). Catalyzes the demethylation of isoprenylcysteine methylesters. The protein is Probable isoprenylcysteine alpha-carbonyl methylesterase ICMEL1 (IMCEL1) of Oryza sativa subsp. japonica (Rice).